We begin with the raw amino-acid sequence, 438 residues long: Methylenetetrahydrofolate--tRNA-(uracil-5-)-methyltransferase TrmFO (438 aa).

FAD is bound at residue 9-14 (GAGLAG).

It belongs to the MnmG family. TrmFO subfamily. FAD serves as cofactor.

The protein resides in the cytoplasm. The enzyme catalyses uridine(54) in tRNA + (6R)-5,10-methylene-5,6,7,8-tetrahydrofolate + NADH + H(+) = 5-methyluridine(54) in tRNA + (6S)-5,6,7,8-tetrahydrofolate + NAD(+). It carries out the reaction uridine(54) in tRNA + (6R)-5,10-methylene-5,6,7,8-tetrahydrofolate + NADPH + H(+) = 5-methyluridine(54) in tRNA + (6S)-5,6,7,8-tetrahydrofolate + NADP(+). In terms of biological role, catalyzes the folate-dependent formation of 5-methyl-uridine at position 54 (M-5-U54) in all tRNAs. The protein is Methylenetetrahydrofolate--tRNA-(uracil-5-)-methyltransferase TrmFO of Lactobacillus acidophilus (strain ATCC 700396 / NCK56 / N2 / NCFM).